Here is a 249-residue protein sequence, read N- to C-terminus: Triosephosphate isomerase (249 aa).

A substrate-binding site is contributed by 8–10 (NWK). The active-site Electrophile is His-95. Catalysis depends on Glu-163, which acts as the Proton acceptor. Gly-169 and Ser-209 together coordinate substrate.

Belongs to the triosephosphate isomerase family. Homodimer.

Its subcellular location is the cytoplasm. The enzyme catalyses D-glyceraldehyde 3-phosphate = dihydroxyacetone phosphate. It participates in carbohydrate biosynthesis; gluconeogenesis. It functions in the pathway carbohydrate degradation; glycolysis; D-glyceraldehyde 3-phosphate from glycerone phosphate: step 1/1. Involved in the gluconeogenesis. Catalyzes stereospecifically the conversion of dihydroxyacetone phosphate (DHAP) to D-glyceraldehyde-3-phosphate (G3P). The sequence is that of Triosephosphate isomerase from Orientia tsutsugamushi (strain Boryong) (Rickettsia tsutsugamushi).